The chain runs to 306 residues: Glutaminase (306 aa).

Residues serine 61, asparagine 111, glutamate 157, asparagine 164, tyrosine 188, tyrosine 240, and valine 258 each contribute to the substrate site.

It belongs to the glutaminase family. As to quaternary structure, homotetramer.

The catalysed reaction is L-glutamine + H2O = L-glutamate + NH4(+). The protein is Glutaminase of Psychrobacter cryohalolentis (strain ATCC BAA-1226 / DSM 17306 / VKM B-2378 / K5).